The primary structure comprises 756 residues: Serine/threonine-protein kinase CBK1 (756 aa).

Disordered regions lie at residues 1–180 (MYNS…SYSS) and 242–261 (QQQQ…NNGT). The segment covering 23–34 (QQQDQQHQQQQQ) has biased composition (low complexity). Residues 53-77 (FSSNYMKEQGSHQSLQEHLQRETGN) are compositionally biased toward polar residues. The residue at position 109 (threonine 109) is a Phosphothreonine. Residues 120–180 (HNNNSQSMVQ…TLRSNGSYSS (61 aa)) are compositionally biased toward polar residues. Over residues 242-255 (QQQQQQQSQSPVQS) the composition is skewed to low complexity. In terms of domain architecture, Protein kinase spans 352-672 (FHTVKVIGKG…ADEIKSHPFF (321 aa)). ATP-binding positions include 358–366 (IGKGAFGEV) and lysine 381. The Proton acceptor role is filled by aspartate 475. The region spanning 673–754 (RGVDWNTIRQ…SRFDYLTRKN (82 aa)) is the AGC-kinase C-terminal domain. Residues 707–732 (NVPDSPAMAQAAKQREQMTKQGGSAP) form a disordered region.

It belongs to the protein kinase superfamily. STE Ser/Thr protein kinase family. COT1 subfamily. As to quaternary structure, associates with PAG1/TAO3 and interacts with MOB2.

It catalyses the reaction L-seryl-[protein] + ATP = O-phospho-L-seryl-[protein] + ADP + H(+). It carries out the reaction L-threonyl-[protein] + ATP = O-phospho-L-threonyl-[protein] + ADP + H(+). In terms of biological role, protein kinase that seems to play a role in the regulation of cell morphogenesis and proliferation. The sequence is that of Serine/threonine-protein kinase CBK1 (CBK1) from Saccharomyces cerevisiae (strain ATCC 204508 / S288c) (Baker's yeast).